The primary structure comprises 129 residues: MPAKKTAHKRRVKKHVESGVAHIHSTFNNTLVMITDVQGNAVAWSSAGALGFKGSRKSTPFAAQMAAEAAAKSAIDQGMKHIEVSVKGPGSGRESAIRALQAAGLEITSIRDVTPVPHNGSRPPKRRRV.

Belongs to the universal ribosomal protein uS11 family. In terms of assembly, part of the 30S ribosomal subunit. Interacts with proteins S7 and S18. Binds to IF-3.

In terms of biological role, located on the platform of the 30S subunit, it bridges several disparate RNA helices of the 16S rRNA. Forms part of the Shine-Dalgarno cleft in the 70S ribosome. The chain is Small ribosomal subunit protein uS11 from Lactobacillus delbrueckii subsp. bulgaricus (strain ATCC 11842 / DSM 20081 / BCRC 10696 / JCM 1002 / NBRC 13953 / NCIMB 11778 / NCTC 12712 / WDCM 00102 / Lb 14).